The chain runs to 1938 residues: Myosin-1 (1938 aa).

A disordered region spans residues 1 to 27; sequence MSLEHEKDPGWQYLKRSREQQLADQSR. The span at 16–27 shows a compositional bias: basic and acidic residues; that stretch reads RSREQQLADQSR. The 51-residue stretch at 30–80 folds into the Myosin N-terminal SH3-like domain; that stretch reads DSKKNVWIPDAEEGYIEGVIKGPGPKADTVIVTAGGKDVTLKKDIVQEVNP. Residues 84–785 form the Myosin motor domain; sequence EKTEDMSNLT…VVAHIEDLRD (702 aa). Lys128 is modified (N6,N6,N6-trimethyllysine). 177-184 is an ATP binding site; that stretch reads GESGAGKT. 2 actin-binding regions span residues 660–682 and 764–778; these read LNKLMTMLHKTHPHFIRCIIPNE and RIGHTKVFFKAGVVA. Residues 846-1170 are alpha-helical tailpiece (short S2); sequence QLKCGKMAEE…NKQLEIQQDN (325 aa). Positions 846–1938 are rodlike tail (S2 and LMM domains); the sequence is QLKCGKMAEE…GQVVRSATNK (1093 aa). Residues 846-1938 adopt a coiled-coil conformation; it reads QLKCGKMAEE…GQVVRSATNK (1093 aa). The interval 919–951 is disordered; the sequence is RQEVEKSLNDANDRLSEHEEKNADLEKQRRKAQ. The span at 920 to 951 shows a compositional bias: basic and acidic residues; it reads QEVEKSLNDANDRLSEHEEKNADLEKQRRKAQ. The segment at 1171-1938 is light meromyosin (LMM); it reads NKKKDSEIIK…GQVVRSATNK (768 aa).

This sequence belongs to the TRAFAC class myosin-kinesin ATPase superfamily. Myosin family. In terms of assembly, muscle myosin is a hexameric protein that consists of 2 heavy chain subunits (MHC), 2 alkali light chain subunits (MLC) and 2 regulatory light chain subunits (MLC-2). Interacts with itr-1 (via c-terminal coiled coil domain). Found exclusively in the pharyngeal muscle.

Its subcellular location is the cytoplasm. The protein localises to the myofibril. Functionally, muscle contraction. The chain is Myosin-1 from Caenorhabditis elegans.